The sequence spans 264 residues: S-adenosylmethionine decarboxylase proenzyme (264 aa).

The active-site Schiff-base intermediate with substrate; via pyruvic acid is the Ser-112. A Pyruvic acid (Ser); by autocatalysis modification is found at Ser-112. The active-site Proton acceptor; for processing activity is the His-117. Cys-140 (proton donor; for catalytic activity) is an active-site residue.

It belongs to the prokaryotic AdoMetDC family. Type 2 subfamily. Heterooctamer of four alpha and four beta chains arranged as a tetramer of alpha/beta heterodimers. Requires pyruvate as cofactor. In terms of processing, is synthesized initially as an inactive proenzyme. Formation of the active enzyme involves a self-maturation process in which the active site pyruvoyl group is generated from an internal serine residue via an autocatalytic post-translational modification. Two non-identical subunits are generated from the proenzyme in this reaction, and the pyruvate is formed at the N-terminus of the alpha chain, which is derived from the carboxyl end of the proenzyme. The post-translation cleavage follows an unusual pathway, termed non-hydrolytic serinolysis, in which the side chain hydroxyl group of the serine supplies its oxygen atom to form the C-terminus of the beta chain, while the remainder of the serine residue undergoes an oxidative deamination to produce ammonia and the pyruvoyl group blocking the N-terminus of the alpha chain.

It catalyses the reaction S-adenosyl-L-methionine + H(+) = S-adenosyl 3-(methylsulfanyl)propylamine + CO2. It functions in the pathway amine and polyamine biosynthesis; S-adenosylmethioninamine biosynthesis; S-adenosylmethioninamine from S-adenosyl-L-methionine: step 1/1. In terms of biological role, catalyzes the decarboxylation of S-adenosylmethionine to S-adenosylmethioninamine (dcAdoMet), the propylamine donor required for the synthesis of the polyamines spermine and spermidine from the diamine putrescine. The polypeptide is S-adenosylmethionine decarboxylase proenzyme (Klebsiella pneumoniae subsp. pneumoniae (strain ATCC 700721 / MGH 78578)).